The chain runs to 334 residues: Putative ankyrin repeat protein RBE_0347 (334 aa).

ANK repeat units lie at residues Glu-80 to Ser-90, Ser-91 to Ile-120, Ser-124 to Phe-161, and Val-162 to Val-191.

This chain is Putative ankyrin repeat protein RBE_0347, found in Rickettsia bellii (strain RML369-C).